The following is a 392-amino-acid chain: S-adenosylmethionine synthase (392 aa).

H20 serves as a coordination point for ATP. A Mg(2+)-binding site is contributed by D22. Residue E48 participates in K(+) binding. L-methionine-binding residues include E61 and Q106. A flexible loop region spans residues 106–116; it reads QSQDIINAIKK. ATP is bound by residues 171 to 173, D248, 254 to 255, A271, and K275; these read DSK and RK. L-methionine is bound at residue D248. An L-methionine-binding site is contributed by K279.

The protein belongs to the AdoMet synthase family. As to quaternary structure, homotetramer; dimer of dimers. Mg(2+) serves as cofactor. Requires K(+) as cofactor.

Its subcellular location is the cytoplasm. It carries out the reaction L-methionine + ATP + H2O = S-adenosyl-L-methionine + phosphate + diphosphate. Its pathway is amino-acid biosynthesis; S-adenosyl-L-methionine biosynthesis; S-adenosyl-L-methionine from L-methionine: step 1/1. Catalyzes the formation of S-adenosylmethionine (AdoMet) from methionine and ATP. The overall synthetic reaction is composed of two sequential steps, AdoMet formation and the subsequent tripolyphosphate hydrolysis which occurs prior to release of AdoMet from the enzyme. The chain is S-adenosylmethionine synthase from Borrelia garinii subsp. bavariensis (strain ATCC BAA-2496 / DSM 23469 / PBi) (Borreliella bavariensis).